The primary structure comprises 131 residues: MSRIIALIISFLLVGCATPPMPAQRIVGEVRMSRPLSRTAHIDVSIFGLYEGKVREVQRTRFETGNLPLFFSIKLNPAQRGEGELYLRSTLSFPERGVQAVAQQKLIGKNKVVLQMIPKTCYPNCQSPNTR.

Residues 1 to 15 (MSRIIALIISFLLVG) form the signal peptide. Cys16 carries the N-palmitoyl cysteine lipid modification. The S-diacylglycerol cysteine moiety is linked to residue Cys16.

Belongs to the ExsB/YscW family. In terms of assembly, interacts with YscC/SctC.

The protein localises to the cell outer membrane. In terms of biological role, involved in the synthesis of the type III secretion system (T3SS), also called injectisome, which is used to inject bacterial effector proteins into eukaryotic host cells. Pilot protein that is required for the proper localization of the secretin YscC/SctC in the outer membrane. Also required for efficient oligomerization of YscC/SctC and stabilization of the oligomers. This Yersinia enterocolitica protein is Type 3 secretion system pilotin.